The sequence spans 202 residues: UPF0301 protein BCG_0069 (202 aa).

The protein belongs to the UPF0301 (AlgH) family.

In Mycobacterium bovis (strain BCG / Pasteur 1173P2), this protein is UPF0301 protein BCG_0069.